Reading from the N-terminus, the 557-residue chain is TBCC domain-containing protein 1 (557 aa).

In terms of domain architecture, C-CAP/cofactor C-like spans 290-435 (TTKRAKIACN…LEDHMARTGL (146 aa)).

This sequence belongs to the TBCC family.

It localises to the cytoplasm. Its subcellular location is the cytoskeleton. The protein localises to the microtubule organizing center. The protein resides in the centrosome. It is found in the spindle pole. In terms of biological role, plays a role in the regulation of centrosome and Golgi apparatus positioning, with consequences on cell shape and cell migration. The polypeptide is TBCC domain-containing protein 1 (TBCCD1) (Bos taurus (Bovine)).